The chain runs to 424 residues: Histidine--tRNA ligase (424 aa).

It belongs to the class-II aminoacyl-tRNA synthetase family. In terms of assembly, homodimer.

Its subcellular location is the cytoplasm. It carries out the reaction tRNA(His) + L-histidine + ATP = L-histidyl-tRNA(His) + AMP + diphosphate + H(+). The protein is Histidine--tRNA ligase of Salmonella heidelberg (strain SL476).